The following is a 181-amino-acid chain: Peptidyl-tRNA hydrolase 2, mitochondrial (181 aa).

Residues 10–32 (YLVHPGTLSLAAGVACGMCLGWG) form a helical membrane-spanning segment. Residues lysine 78, lysine 83, lysine 97, lysine 108, lysine 117, and lysine 179 each participate in a glycyl lysine isopeptide (Lys-Gly) (interchain with G-Cter in ubiquitin) cross-link.

The protein belongs to the PTH2 family. As to quaternary structure, monomer. Ubiquitinated by PRKN during mitophagy, leading to its degradation and enhancement of mitophagy. Deubiquitinated by USP30.

Its subcellular location is the mitochondrion outer membrane. It catalyses the reaction an N-acyl-L-alpha-aminoacyl-tRNA + H2O = an N-acyl-L-amino acid + a tRNA + H(+). Its function is as follows. Peptidyl-tRNA hydrolase which releases tRNAs from the ribosome during protein synthesis. Promotes caspase-independent apoptosis by regulating the function of two transcriptional regulators, AES and TLE1. The sequence is that of Peptidyl-tRNA hydrolase 2, mitochondrial (Ptrh2) from Mus musculus (Mouse).